A 908-amino-acid polypeptide reads, in one-letter code: Flap endonuclease GEN homolog 1 (908 aa).

The tract at residues 2-96 (GVNDLWQILE…SKRTQTRYGP (95 aa)) is XPG-N domain. Residues D30, E75, E134, E136, D155, D157, and D208 each coordinate Mg(2+). Residues 122–208 (ECLGMPWVQA…VGLAVLLGCD (87 aa)) are XPG-I domain. Residues 208–383 (DYLPKGVPGV…LLVLLTRYDM (176 aa)) form a 5'-3' exonuclease domain region. The tract at residues 389 to 463 (GRKTSNQLQP…VYQKQLSETK (75 aa)) is chromodomain. Disordered stretches follow at residues 460–482 (SETK…LPEA), 629–650 (YESE…QSNP), 792–834 (RDSS…NKLR), and 853–886 (AEDE…SWEN). Basic residues predominate over residues 465-476 (RKQKSMKNKPKG). 2 positions are modified to phosphoserine: S794 and S795. Residues 824–834 (HVRDSTHNKLR) are compositionally biased toward basic and acidic residues.

It belongs to the XPG/RAD2 endonuclease family. GEN subfamily. In terms of assembly, largely monomeric, dimerizes on the Holliday junction and the first nick occurs upon dimerization at the junction. Mg(2+) is required as a cofactor. As to expression, expressed in bone marrow and testis and to a lesser extent in thymus, spleen, brain and colon.

It localises to the nucleus. Its function is as follows. Endonuclease which resolves Holliday junctions (HJs) by the introduction of symmetrically related cuts across the junction point, to produce nicked duplex products in which the nicks can be readily ligated. Four-way DNA intermediates, also known as Holliday junctions, are formed during homologous recombination and DNA repair, and their resolution is necessary for proper chromosome segregation. Cleaves HJs by a nick and counter-nick mechanism involving dual coordinated incisions that lead to the formation of ligatable nicked duplex products. Cleavage of the first strand is rate limiting, while second strand cleavage is rapid. Largely monomeric, dimerizes on the HJ and the first nick occurs upon dimerization at the junction. Efficiently cleaves both single and double HJs contained within large recombination intermediates. Exhibits a weak sequence preference for incision between two G residues that reside in a T-rich region of DNA. Also has endonuclease activity on 5'-flap and replication fork (RF) DNA substrates. The sequence is that of Flap endonuclease GEN homolog 1 (Gen1) from Mus musculus (Mouse).